We begin with the raw amino-acid sequence, 184 residues long: Ribosome maturation factor RimM (184 aa).

A PRC barrel domain is found at 104–184 (SEDEFYWREL…RIEVDWDPGF (81 aa)).

It belongs to the RimM family. As to quaternary structure, binds ribosomal protein uS19.

Its subcellular location is the cytoplasm. In terms of biological role, an accessory protein needed during the final step in the assembly of 30S ribosomal subunit, possibly for assembly of the head region. Essential for efficient processing of 16S rRNA. May be needed both before and after RbfA during the maturation of 16S rRNA. It has affinity for free ribosomal 30S subunits but not for 70S ribosomes. The chain is Ribosome maturation factor RimM from Vibrio atlanticus (strain LGP32) (Vibrio splendidus (strain Mel32)).